A 608-amino-acid polypeptide reads, in one-letter code: Protein trichome birefringence (608 aa).

A helical; Signal-anchor for type II membrane protein transmembrane segment spans residues 38–58; it reads TFAYAFVITFVSFTLFFAFSP. Polar residues-rich tracts occupy residues 101-137 and 145-203; these read STKP…QTPA and AKNT…TSPA. The interval 101–236 is disordered; the sequence is STKPTNRSSD…TPKKQTKTVD (136 aa). Over residues 215 to 227 the composition is skewed to low complexity; that stretch reads TNSSSNSSTASST. The short motif at 328–330 is the GDS motif element; sequence GDS. The short motif at 573–587 is the DCXHWCLPGXXDXWN motif element; it reads DCSHWCLPGVPDSWN.

It belongs to the PC-esterase family. TBL subfamily. In terms of tissue distribution, expressed in leaf vasculature, growing part of the root, expanding inflorescence stems and trichomes.

It is found in the membrane. Required during cellulose deposition. May act as a bridging protein that binds pectin and other cell wall polysaccharides. Probably involved in maintaining esterification of pectins. May be involved in the specific O-acetylation of cell wall polymers. This chain is Protein trichome birefringence (TBR), found in Arabidopsis thaliana (Mouse-ear cress).